A 167-amino-acid polypeptide reads, in one-letter code: Urease accessory protein UreE (167 aa).

The disordered stretch occupies residues 137 to 158; the sequence is EAGAYQSAPHGHSHSHAHGHDH.

The protein belongs to the UreE family.

The protein localises to the cytoplasm. Involved in urease metallocenter assembly. Binds nickel. Probably functions as a nickel donor during metallocenter assembly. This is Urease accessory protein UreE from Pseudomonas putida (strain ATCC 700007 / DSM 6899 / JCM 31910 / BCRC 17059 / LMG 24140 / F1).